A 456-amino-acid polypeptide reads, in one-letter code: Bifunctional protein GlmU (456 aa).

Positions 1–229 are pyrophosphorylase; it reads MLNNAMSVVI…LSEVEGVNNR (229 aa). UDP-N-acetyl-alpha-D-glucosamine is bound by residues 11 to 14, lysine 25, glutamine 76, 81 to 82, 103 to 105, glycine 140, glutamate 154, asparagine 169, and asparagine 227; these read LAAG, GT, and YGD. Aspartate 105 lines the Mg(2+) pocket. Residue asparagine 227 participates in Mg(2+) binding. The tract at residues 230–250 is linker; that stretch reads LQLSRLERVYQSEQAEKLLLA. The N-acetyltransferase stretch occupies residues 251–456; the sequence is GVMLRDPARF…EGWRRPVKKK (206 aa). Arginine 333 and lysine 351 together coordinate UDP-N-acetyl-alpha-D-glucosamine. The Proton acceptor role is filled by histidine 363. UDP-N-acetyl-alpha-D-glucosamine-binding residues include tyrosine 366 and asparagine 377. Residues alanine 380, 386–387, serine 405, alanine 423, and arginine 440 each bind acetyl-CoA; that span reads NY.

This sequence in the N-terminal section; belongs to the N-acetylglucosamine-1-phosphate uridyltransferase family. In the C-terminal section; belongs to the transferase hexapeptide repeat family. As to quaternary structure, homotrimer. Mg(2+) serves as cofactor.

It localises to the cytoplasm. The enzyme catalyses alpha-D-glucosamine 1-phosphate + acetyl-CoA = N-acetyl-alpha-D-glucosamine 1-phosphate + CoA + H(+). It carries out the reaction N-acetyl-alpha-D-glucosamine 1-phosphate + UTP + H(+) = UDP-N-acetyl-alpha-D-glucosamine + diphosphate. It participates in nucleotide-sugar biosynthesis; UDP-N-acetyl-alpha-D-glucosamine biosynthesis; N-acetyl-alpha-D-glucosamine 1-phosphate from alpha-D-glucosamine 6-phosphate (route II): step 2/2. The protein operates within nucleotide-sugar biosynthesis; UDP-N-acetyl-alpha-D-glucosamine biosynthesis; UDP-N-acetyl-alpha-D-glucosamine from N-acetyl-alpha-D-glucosamine 1-phosphate: step 1/1. It functions in the pathway bacterial outer membrane biogenesis; LPS lipid A biosynthesis. Functionally, catalyzes the last two sequential reactions in the de novo biosynthetic pathway for UDP-N-acetylglucosamine (UDP-GlcNAc). The C-terminal domain catalyzes the transfer of acetyl group from acetyl coenzyme A to glucosamine-1-phosphate (GlcN-1-P) to produce N-acetylglucosamine-1-phosphate (GlcNAc-1-P), which is converted into UDP-GlcNAc by the transfer of uridine 5-monophosphate (from uridine 5-triphosphate), a reaction catalyzed by the N-terminal domain. The polypeptide is Bifunctional protein GlmU (Shigella boydii serotype 18 (strain CDC 3083-94 / BS512)).